Reading from the N-terminus, the 343-residue chain is Coiled-coil domain-containing protein 97 (343 aa).

Met1 is modified (N-acetylmethionine). The interval Met1–Pro37 is disordered. A Phosphothreonine modification is found at Thr47. 3 disordered regions span residues Ala200 to Leu220, Gln234 to Glu277, and Arg292 to Asp343. Residues Leu224–Gln262 are a coiled coil. Residues Gln241 to Asp261 show a composition bias toward acidic residues. A compositionally biased stretch (basic and acidic residues) spans Gln262–Glu277. Residues Ser275 and Ser337 each carry the phosphoserine modification. Acidic residues predominate over residues Glu324–Asp343.

As to quaternary structure, associates with splicing factor SF3B complex, involved in branch-site recognition.

It is found in the nucleus. In terms of biological role, may play a role pre-mRNA splicing through the association with the splicing factor SF3B complex which is involved in branch-site recognition. The polypeptide is Coiled-coil domain-containing protein 97 (CCDC97) (Homo sapiens (Human)).